We begin with the raw amino-acid sequence, 508 residues long: Metalloprotease TIKI1 (508 aa).

Positions Met1–Ser23 are cleaved as a signal peptide. Residues Ser24 to Ser485 lie on the Extracellular side of the membrane. Residues Asn219, Asn228, Asn277, and Asn335 are each glycosylated (N-linked (GlcNAc...) asparagine). The chain crosses the membrane as a helical span at residues Phe486–Val506. Residues Leu507–Gln508 lie on the Cytoplasmic side of the membrane.

The protein belongs to the TIKI family. Mn(2+) is required as a cofactor. Co(2+) serves as cofactor. Zygotically expressed in the Spemann-Mangold organizer, in particular in the head Spemann-Mangold organizer region responsible for anterior patterning.

It is found in the cell membrane. Metalloprotease that acts as a negative regulator of the Wnt signaling pathway: expressed in the Spemann-Mangold organizer and is required for anterior-neural patterning in head formation in embryos. Acts by mediating the cleavage of the N-terminal residues of a subset of Wnt proteins. Following cleavage, Wnt proteins become oxidized and form large disulfide-bond oligomers, leading to their inactivation. Able to cleave wnt8. The polypeptide is Metalloprotease TIKI1 (trabd2a) (Xenopus tropicalis (Western clawed frog)).